A 230-amino-acid chain; its full sequence is Ion-translocating oxidoreductase complex subunit E (230 aa).

6 helical membrane-spanning segments follow: residues Ala18–Ala38, Leu39–Leu59, Thr63–Val83, Leu86–Val106, Trp125–Leu145, and Pro182–Val202.

Belongs to the NqrDE/RnfAE family. In terms of assembly, the complex is composed of six subunits: RsxA, RsxB, RsxC, RsxD, RsxE and RsxG.

The protein resides in the cell inner membrane. Functionally, part of a membrane-bound complex that couples electron transfer with translocation of ions across the membrane. Required to maintain the reduced state of SoxR. This is Ion-translocating oxidoreductase complex subunit E from Salmonella agona (strain SL483).